A 152-amino-acid chain; its full sequence is Nucleoside diphosphate kinase A 1 (152 aa).

ATP is bound by residues Lys-12, Phe-60, Arg-88, Thr-94, Arg-105, and Asn-115. His-118 functions as the Pros-phosphohistidine intermediate in the catalytic mechanism.

Belongs to the NDK family. In terms of assembly, homohexamer. Requires Mg(2+) as cofactor. Post-translationally, the N-terminus is blocked.

Its subcellular location is the cytoplasm. The protein localises to the cell membrane. It localises to the nucleus. The catalysed reaction is a 2'-deoxyribonucleoside 5'-diphosphate + ATP = a 2'-deoxyribonucleoside 5'-triphosphate + ADP. It carries out the reaction a ribonucleoside 5'-diphosphate + ATP = a ribonucleoside 5'-triphosphate + ADP. With respect to regulation, autophosphorylation at His-118 increases serine/threonine protein kinase activity of the enzyme. Interaction with the SET complex inhibits exonuclease activity. Major role in the synthesis of nucleoside triphosphates other than ATP. Possesses nucleoside-diphosphate kinase, serine/threonine-specific protein kinase, geranyl and farnesyl pyrophosphate kinase, histidine protein kinase and 3'-5' exonuclease activities. Involved in cell proliferation, differentiation and development, signal transduction, G protein-coupled receptor endocytosis, and gene expression. Required for neural development including neural patterning and cell fate determination. The protein is Nucleoside diphosphate kinase A 1 (NME1-1) of Bos taurus (Bovine).